A 1055-amino-acid chain; its full sequence is Elongation factor 3 (1055 aa).

Valine 45 lines the ADP pocket. HEAT repeat units follow at residues 48 to 86 (FTQI…NGAA), 96 to 133 (SAEN…SMNP), 134 to 172 (WASF…SAPF), 176 to 213 (EAMP…LVEN), 218 to 255 (KFVP…APTI), 257 to 290 (LIAP…LVDS), and 296 to 337 (PFLP…VPAE). 2 consecutive ABC transporter domains span residues 447–659 (CNIE…SYYQ) and 687–1004 (LKMR…KKAA). 4 residues coordinate ADP: asparagine 723, glutamate 933, asparagine 936, and histidine 962. The interval 1024 to 1055 (EKKLSAADKRKAKKDRMARRKRGEEVFSDEEL) is disordered. Residues 1033-1044 (RKAKKDRMARRK) show a composition bias toward basic residues.

The protein belongs to the ABC transporter superfamily. ABCF family. EF3 subfamily. As to quaternary structure, interacts with CCH1; the interaction is direct and required for the localization of CCH1 to the cell membrane.

The protein localises to the cytoplasm. It is found in the cytosol. It carries out the reaction ATP + H2O = ADP + phosphate + H(+). The protein operates within protein biosynthesis; polypeptide chain elongation. Ribosome-dependent ATPase that functions in cytoplasmic translation elongation. Required for the ATP-dependent release of deacylated tRNA from the ribosomal E-site during protein biosynthesis. Stimulates the eEF1A-dependent binding of aminoacyl-tRNA to the ribosomal A-site, which has reduced affinity for tRNA as long as the E-site is occupied. Assists translation termination by stimulating the release of nascent protein from the ribosome by release factors. Appears to localize calcium-channel protein CCH1 to the plasma membrane. The chain is Elongation factor 3 from Cryptococcus neoformans var. grubii serotype A (strain H99 / ATCC 208821 / CBS 10515 / FGSC 9487) (Filobasidiella neoformans var. grubii).